We begin with the raw amino-acid sequence, 255 residues long: Small ribosomal subunit protein uS2 (255 aa).

It belongs to the universal ribosomal protein uS2 family.

In Streptococcus pyogenes serotype M49 (strain NZ131), this protein is Small ribosomal subunit protein uS2.